We begin with the raw amino-acid sequence, 106 residues long: UPF0145 protein Pput_2816 (106 aa).

The protein belongs to the UPF0145 family.

This chain is UPF0145 protein Pput_2816, found in Pseudomonas putida (strain ATCC 700007 / DSM 6899 / JCM 31910 / BCRC 17059 / LMG 24140 / F1).